We begin with the raw amino-acid sequence, 75 residues long: Exodeoxyribonuclease 7 small subunit (75 aa).

It belongs to the XseB family. As to quaternary structure, heterooligomer composed of large and small subunits.

The protein resides in the cytoplasm. It catalyses the reaction Exonucleolytic cleavage in either 5'- to 3'- or 3'- to 5'-direction to yield nucleoside 5'-phosphates.. Functionally, bidirectionally degrades single-stranded DNA into large acid-insoluble oligonucleotides, which are then degraded further into small acid-soluble oligonucleotides. This is Exodeoxyribonuclease 7 small subunit from Chlamydia felis (strain Fe/C-56) (Chlamydophila felis).